The following is a 570-amino-acid chain: Peptidyl-prolyl cis-trans isomerase FKBP9 (570 aa).

The N-terminal stretch at 1 to 24 (MALGARGWRRRSLLLLLLWVTGQA) is a signal peptide. 4 PPIase FKBP-type domains span residues 54 to 142 (GDFV…VDIW), 166 to 254 (SDFV…LDLH), 278 to 365 (GDFL…IDFH), and 389 to 477 (GDYL…LELV). 4 N-linked (GlcNAc...) asparagine glycosylation sites follow: Asn-174, Asn-286, Asn-302, and Asn-397. 2 consecutive EF-hand domains span residues 488–523 (WNGE…QVAT) and 533–568 (NAEM…AKHD). Ca(2+) contacts are provided by Asp-501, Asp-503, Asn-505, Glu-507, Glu-512, Asp-546, Asn-548, Asp-550, Lys-552, and Glu-557. The Prevents secretion from ER signature appears at 567-570 (HDEL).

In terms of processing, phosphorylated. As to expression, predominantly expressed in heart, skeletal muscle, lung, liver and kidney. Lower levels found in brain, spleen and testis.

The protein resides in the endoplasmic reticulum lumen. It catalyses the reaction [protein]-peptidylproline (omega=180) = [protein]-peptidylproline (omega=0). With respect to regulation, inhibited by FK506. Its function is as follows. PPIases accelerate the folding of proteins during protein synthesis. In Mus musculus (Mouse), this protein is Peptidyl-prolyl cis-trans isomerase FKBP9 (Fkbp9).